The following is a 224-amino-acid chain: MDQFIKQDETGDLIETGMNVANHFLSAPIQGTNSLSKASIIPGVAPVLIGNPEQKNIQHPTASHQGSKSKGSGSGVRSIIVPPSEAGNGGTQDPEPLFAQTGQGGIVTTVYQDPTIQPTGSSRSVELAKIGKERMINRFVEKPRISTPVTEFKRGAGSGCSRPDNPRGGHRREWSLSWVQGEVRVFEWCNPICSPITAAARFHSCKCGNCPAKCDQCERDYGPP.

The span at 54–65 (QKNIQHPTASHQ) shows a compositional bias: polar residues. Disordered regions lie at residues 54–96 (QKNI…DPEP) and 150–171 (TEFKRGAGSGCSRPDNPRGGHR). Positions 170, 189, 193, 205, 207, 210, 214, and 217 each coordinate Zn(2+).

It belongs to the paramyxoviruses V protein family. As to quaternary structure, interacts with host IFIH1/MDA5 and DHX58/LGP2. Forms with host DDB1, CUL4A, STAT1, STAT2 and STAT3 the mumps virus V-dependent complex (VDC).

It is found in the virion. The protein localises to the host cytoplasm. Plays an essential role in the inhibition of host immune response. Prevents the establishment of cellular antiviral state by blocking interferon-alpha/beta (IFN-alpha/beta) production and signaling pathway. Interacts with host IFIH1/MDA5 and DHX58/LGP2 to inhibit the transduction pathway involved in the activation of IFN-beta promoter, thus protecting the virus against cell antiviral state. Blocks the type I and II interferon signaling pathways by interacting with host STAT1, STAT2 and STAT3, and mediating their ubiquitination and subsequent proteasomal degradation. This chain is Non-structural protein V, found in Mumps virus (strain SBL) (MuV).